A 1260-amino-acid polypeptide reads, in one-letter code: Myosin-1 (1260 aa).

The Myosin motor domain occupies valine 34–aspartate 713. Residue glycine 127 to threonine 134 participates in ATP binding. Serine 355 is subject to Phosphoserine. The interval serine 402–serine 484 is actin-binding. 2 consecutive IQ domains span residues tyrosine 717–serine 737 and alanine 738–arginine 763. Positions lysine 769–alanine 959 constitute a TH1 domain. 2 stretches are compositionally biased toward polar residues: residues serine 948–glutamine 963 and threonine 972–tyrosine 988. The disordered stretch occupies residues serine 948–proline 1106. Residues glycine 989–histidine 1013 are compositionally biased toward low complexity. Over residues glutamine 1030–arginine 1064 the composition is skewed to polar residues. Over residues glutamine 1065–alanine 1082 the composition is skewed to low complexity. The span at alanine 1092 to threonine 1101 shows a compositional bias: pro residues. The SH3 domain maps to glutamine 1103–glutamate 1165.

This sequence belongs to the TRAFAC class myosin-kinesin ATPase superfamily. Myosin family. Phosphorylation of the TEDS site (Ser-355) is required for the polarization of the actin cytoskeleton. Phosphorylation probably activates the myosin-I ATPase activity.

The protein localises to the cytoplasm. It localises to the cytoskeleton. Its subcellular location is the actin patch. Functionally, type-I myosin implicated in the organization of the actin cytoskeleton. Required for proper actin cytoskeleton polarization. At the cell cortex, assembles in patch-like structures together with proteins from the actin-polymerizing machinery and promotes actin assembly. Functions as actin nucleation-promoting factor (NPF) for the Arp2/3 complex. The sequence is that of Myosin-1 (MYO1) from Kluyveromyces lactis (strain ATCC 8585 / CBS 2359 / DSM 70799 / NBRC 1267 / NRRL Y-1140 / WM37) (Yeast).